Here is a 180-residue protein sequence, read N- to C-terminus: 3-deoxy-D-manno-octulosonate 8-phosphate phosphatase KdsC (180 aa).

The Mg(2+) site is built by aspartate 14 and aspartate 16. Residues aspartate 16, histidine 37–glycine 41, lysine 45, arginine 60, arginine 68, and lysine 84 each bind substrate. Residue aspartate 107 participates in Mg(2+) binding.

It belongs to the KdsC family. In terms of assembly, homotetramer. Requires Mg(2+) as cofactor.

The catalysed reaction is 3-deoxy-alpha-D-manno-2-octulosonate-8-phosphate + H2O = 3-deoxy-alpha-D-manno-oct-2-ulosonate + phosphate. In terms of biological role, catalyzes the hydrolysis of 3-deoxy-D-manno-octulosonate 8-phosphate (KDO 8-P) to 3-deoxy-D-manno-octulosonate (KDO) and inorganic phosphate. The sequence is that of 3-deoxy-D-manno-octulosonate 8-phosphate phosphatase KdsC from Haemophilus influenzae (strain ATCC 51907 / DSM 11121 / KW20 / Rd).